Reading from the N-terminus, the 220-residue chain is Pyridoxine/pyridoxamine 5'-phosphate oxidase (220 aa).

Residues 8 to 11 (RKSY) and Lys-66 each bind substrate. FMN contacts are provided by residues 61 to 66 (RVVLIK), 76 to 77 (FT), Arg-82, and Lys-83. Positions 123, 127, and 131 each coordinate substrate. FMN-binding positions include 140-141 (QS) and Trp-184. A substrate-binding site is contributed by 190–192 (RLH). Position 194 (Arg-194) interacts with FMN.

It belongs to the pyridoxamine 5'-phosphate oxidase family. In terms of assembly, homodimer. Requires FMN as cofactor.

It catalyses the reaction pyridoxamine 5'-phosphate + O2 + H2O = pyridoxal 5'-phosphate + H2O2 + NH4(+). It carries out the reaction pyridoxine 5'-phosphate + O2 = pyridoxal 5'-phosphate + H2O2. Its pathway is cofactor metabolism; pyridoxal 5'-phosphate salvage; pyridoxal 5'-phosphate from pyridoxamine 5'-phosphate: step 1/1. It participates in cofactor metabolism; pyridoxal 5'-phosphate salvage; pyridoxal 5'-phosphate from pyridoxine 5'-phosphate: step 1/1. Its function is as follows. Catalyzes the oxidation of either pyridoxine 5'-phosphate (PNP) or pyridoxamine 5'-phosphate (PMP) into pyridoxal 5'-phosphate (PLP). This chain is Pyridoxine/pyridoxamine 5'-phosphate oxidase, found in Albidiferax ferrireducens (strain ATCC BAA-621 / DSM 15236 / T118) (Rhodoferax ferrireducens).